A 210-amino-acid polypeptide reads, in one-letter code: Regulator of G-protein signaling 17 (210 aa).

The interval 1–21 is disordered; the sequence is MRKRQQSQNEGTPAVSQAPGN. The RGS domain maps to 84–200; sequence NFDKMMKAPA…LNSQIYKSFV (117 aa). Phosphotyrosine is present on Tyr-137.

As to quaternary structure, interacts with GNAI1 and GNAQ. Interacts with GNAZ and GNAI2. Interacts with OPRM1. Forms a complex with mu-opioid receptors and G(alpha)z/i2 subunits, including GNAZ and GNAI2; the formation of this complex results in mu-opioid receptor desensitization. Interacts with HINT1. N- and O-glycosylated in synapsomal membranes. In terms of processing, serine phosphorylated in synapsomal membranes. Post-translationally, sumoylated with SUMO1 and SUM02 in synaptosomes. The sumoylated forms act as a scaffold for sequestering mu-opioid receptor-activated G(alpha) subunits. Desumoylated by HINT1. Predominantly expressed in the cerebellum. Also expressed in the cortex and medulla. Weakly expressed in a number of peripheral tissues notably spleen, lung and leukocytes.

It is found in the membrane. It localises to the synapse. Its subcellular location is the synaptosome. The protein localises to the nucleus. The protein resides in the cytoplasm. In terms of biological role, regulates G protein-coupled receptor signaling cascades, including signaling via muscarinic acetylcholine receptor CHRM2 and dopamine receptor DRD2. Inhibits signal transduction by increasing the GTPase activity of G protein alpha subunits, thereby driving them into their inactive GDP-bound form. Binds selectively to GNAZ and GNAI2 subunits, accelerates their GTPase activity and regulates their signaling activities. Negatively regulates mu-opioid receptor-mediated activation of the G-proteins. In Homo sapiens (Human), this protein is Regulator of G-protein signaling 17 (RGS17).